We begin with the raw amino-acid sequence, 104 residues long: Large ribosomal subunit protein uL24 (104 aa).

It belongs to the universal ribosomal protein uL24 family. Part of the 50S ribosomal subunit.

One of two assembly initiator proteins, it binds directly to the 5'-end of the 23S rRNA, where it nucleates assembly of the 50S subunit. Its function is as follows. One of the proteins that surrounds the polypeptide exit tunnel on the outside of the subunit. The chain is Large ribosomal subunit protein uL24 from Corynebacterium aurimucosum (strain ATCC 700975 / DSM 44827 / CIP 107346 / CN-1) (Corynebacterium nigricans).